Consider the following 448-residue polypeptide: Ribosomal protein uS12 methylthiotransferase RimO (448 aa).

The 117-residue stretch at 7–123 folds into the MTTase N-terminal domain; it reads EKVSLVSLGC…IAEIIAEKKQ (117 aa). The [4Fe-4S] cluster site is built by Cys16, Cys52, Cys86, Cys161, Cys165, and Cys168. One can recognise a Radical SAM core domain in the interval 147–377; it reads SSPHYTAYLK…MRTQARVSFK (231 aa). The region spanning 380–448 is the TRAM domain; it reads RTLVDSEEDV…DYDLIGEIVD (69 aa).

Belongs to the methylthiotransferase family. RimO subfamily. Requires [4Fe-4S] cluster as cofactor.

It is found in the cytoplasm. The catalysed reaction is L-aspartate(89)-[ribosomal protein uS12]-hydrogen + (sulfur carrier)-SH + AH2 + 2 S-adenosyl-L-methionine = 3-methylsulfanyl-L-aspartate(89)-[ribosomal protein uS12]-hydrogen + (sulfur carrier)-H + 5'-deoxyadenosine + L-methionine + A + S-adenosyl-L-homocysteine + 2 H(+). Functionally, catalyzes the methylthiolation of an aspartic acid residue of ribosomal protein uS12. The sequence is that of Ribosomal protein uS12 methylthiotransferase RimO from Citrifermentans bemidjiense (strain ATCC BAA-1014 / DSM 16622 / JCM 12645 / Bem) (Geobacter bemidjiensis).